Here is a 135-residue protein sequence, read N- to C-terminus: ATP synthase epsilon chain, chloroplastic (135 aa).

The protein belongs to the ATPase epsilon chain family. As to quaternary structure, F-type ATPases have 2 components, CF(1) - the catalytic core - and CF(0) - the membrane proton channel. CF(1) has five subunits: alpha(3), beta(3), gamma(1), delta(1), epsilon(1). CF(0) has three main subunits: a, b and c.

It is found in the plastid. Its subcellular location is the chloroplast thylakoid membrane. Produces ATP from ADP in the presence of a proton gradient across the membrane. The chain is ATP synthase epsilon chain, chloroplastic from Stigeoclonium helveticum (Green alga).